The sequence spans 577 residues: Secreted LysM effector Lys4 (577 aa).

Residues 1–19 (MRALTAAVLFVAGLTPVLA) form the signal peptide. One can recognise a LysM 1 domain in the interval 38–85 (AWYTIVKGDGCDTVEKKFKITPEQFFKWNPDVSTDCVKNFWVGNSYCV). A compositionally biased stretch (low complexity) spans 96–121 (TSTTVKSSSTTQKTSSTSSKLSSSSK). The tract at residues 96 to 135 (TSTTVKSSSTTQKTSSTSSKLSSSSKPVNTTTTPYSTRNP) is disordered. Residues 122-135 (PVNTTTTPYSTRNP) show a composition bias toward polar residues. N-linked (GlcNAc...) asparagine glycosylation is found at N124, N140, N216, and N235. LysM domains lie at 251-298 (NFYQ…YYCV), 328-375 (KWYQ…WYCV), and 408-455 (QYWL…YVCV). A compositionally biased stretch (low complexity) spans 464-485 (SGSTTTITGPPTKGSNPPTTTT). The interval 464–490 (SGSTTTITGPPTKGSNPPTTTTSGGGG) is disordered. A LysM 5 domain is found at 510–558 (FWFRGKDGASLFCADIAKDAGVSLPDFLKWNPGVGSNCESLWADTWYCV).

This sequence belongs to the secreted LysM effector family.

In terms of biological role, might have a role in sequestration of chitin oligosaccharides (breakdown products of fungal cell walls that are released during invasion and act as triggers of host immunity) to dampen host defense. This is Secreted LysM effector Lys4 from Pochonia chlamydosporia (strain 123) (Metacordyceps chlamydosporia).